We begin with the raw amino-acid sequence, 145 residues long: Transcriptional regulator MraZ (145 aa).

SpoVT-AbrB domains follow at residues 7 to 54 (NATN…GPDL) and 83 to 126 (GVFM…QPQA).

The protein belongs to the MraZ family. Forms oligomers.

It is found in the cytoplasm. The protein resides in the nucleoid. This is Transcriptional regulator MraZ from Rhizobium leguminosarum bv. trifolii (strain WSM2304).